The sequence spans 598 residues: Aspartate--tRNA ligase (598 aa).

Glu182 contributes to the L-aspartate binding site. The tract at residues 206–209 is aspartate; that stretch reads QLFK. Residue Arg228 coordinates L-aspartate. Residues 228-230 and Gln237 each bind ATP; that span reads RDE. His456 is a binding site for L-aspartate. Glu490 is an ATP binding site. Residue Arg497 coordinates L-aspartate. An ATP-binding site is contributed by 542-545; that stretch reads GVDR.

This sequence belongs to the class-II aminoacyl-tRNA synthetase family. Type 1 subfamily. Homodimer.

Its subcellular location is the cytoplasm. It carries out the reaction tRNA(Asp) + L-aspartate + ATP = L-aspartyl-tRNA(Asp) + AMP + diphosphate. Its function is as follows. Catalyzes the attachment of L-aspartate to tRNA(Asp) in a two-step reaction: L-aspartate is first activated by ATP to form Asp-AMP and then transferred to the acceptor end of tRNA(Asp). The polypeptide is Aspartate--tRNA ligase (Agathobacter rectalis (strain ATCC 33656 / DSM 3377 / JCM 17463 / KCTC 5835 / VPI 0990) (Eubacterium rectale)).